Consider the following 435-residue polypeptide: ATP-dependent Clp protease ATP-binding subunit ClpX 3 (435 aa).

In terms of domain architecture, ClpX-type ZB spans methionine 1–serine 53. Positions 12, 15, 34, and 37 each coordinate Zn(2+). Residue proline 125 to leucine 132 coordinates ATP.

It belongs to the ClpX chaperone family. In terms of assembly, component of the ClpX-ClpP complex. Forms a hexameric ring that, in the presence of ATP, binds to fourteen ClpP subunits assembled into a disk-like structure with a central cavity, resembling the structure of eukaryotic proteasomes.

Functionally, ATP-dependent specificity component of the Clp protease. It directs the protease to specific substrates. Can perform chaperone functions in the absence of ClpP. The sequence is that of ATP-dependent Clp protease ATP-binding subunit ClpX 3 from Methylococcus capsulatus (strain ATCC 33009 / NCIMB 11132 / Bath).